Consider the following 900-residue polypeptide: MKASEEEYRLNFFIKNDFKRKICKSCKTPFWTRDEKKEYCSDIPCTDYYFFDINIKSQPLTVKEAREKFLSFFEKRGHTRISPKPVLARWREDLYLTIASIVDFQPHVTSGLVPPPANPLVVSQPSIRLEDIDNVGITFGRHLTTFEMAAHHAFNYPDHYVYWKEETTAYATEFFTKELGIPEEELNFKESWWEGGGNAGPCLEVTVGGLELATLVFMQYKITDNGNYTPLKLKIVDTGYGVERIAWITQKTPSAFHAIYGNLVYKFFNKIGVAYIDETLLKVASRFAGKIDPDNPDTIKIHRQMVSKELGIDIKAVEEELDRAAKVFQILDHTKTIMLMLADGLVPSNSGEGYLGRLVIRRALKVLRLLKSDVRLYELVKEQIDFWKEDFPQVLKNKDYILDAVELEQQRFEKILEKVPSIASTLARKSEITTEDLIQVYDSNGIPPDLLEEELKKKSVKFELPRNFYALVAKRHQTSTIKSAYDKVKLPKDMLEYITALQPTEKLYYKDQYMRSFEGKVLGVYKNYLILDKTTFYPEGGGQLGDTGLIIDEKSSKRYEVIDTQKVNDVIVHILKEEPSTIKVGDNVRGEINWERRYRLMRHHTVTHVILAAAKKVLGEHVWQAGAEKTPEKGRLDITHHKTLTEEEVKLIENYANSVISDRRQVKPLEMNRMEAEMKYGVSIYEGGVPNSATIRLLEIKDWDIESCGGTHVSNTSEIGAVKIINVERIQDGVIRLEYVAGPALVDYIRETQAKIVEASKIIGTSPDQLTSRLRRILNEIEEKNNLIIQYRRIIETELLNNLKPYEINGNKIYIIEGLGDEEENKEILRKLTSTDNTIAISISDNRLQIATSKNMRVDKIVEELLKGGGKGGGKGTFANVILNSKKSKEEIIEIVRKSL.

Positions 604, 608, 708, and 712 each coordinate Zn(2+).

The protein belongs to the class-II aminoacyl-tRNA synthetase family. It depends on Zn(2+) as a cofactor.

It localises to the cytoplasm. It carries out the reaction tRNA(Ala) + L-alanine + ATP = L-alanyl-tRNA(Ala) + AMP + diphosphate. In terms of biological role, catalyzes the attachment of alanine to tRNA(Ala) in a two-step reaction: alanine is first activated by ATP to form Ala-AMP and then transferred to the acceptor end of tRNA(Ala). Also edits incorrectly charged Ser-tRNA(Ala) and Gly-tRNA(Ala) via its editing domain. The polypeptide is Alanine--tRNA ligase (Saccharolobus islandicus (strain L.S.2.15 / Lassen #1) (Sulfolobus islandicus)).